Here is a 98-residue protein sequence, read N- to C-terminus: DNA-binding protein Fis (98 aa).

Positions 74–93 form a DNA-binding region, H-T-H motif; the sequence is QTRAAQMMGINRGTLRKKLK.

Belongs to the transcriptional regulatory Fis family. Homodimer.

Its function is as follows. Activates ribosomal RNA transcription. Plays a direct role in upstream activation of rRNA promoters. The sequence is that of DNA-binding protein Fis from Sodalis glossinidius (strain morsitans).